We begin with the raw amino-acid sequence, 1405 residues long: DNA-directed RNA polymerase subunit beta' (1405 aa).

4 residues coordinate Zn(2+): Cys71, Cys73, Cys86, and Cys89. Positions 462, 464, and 466 each coordinate Mg(2+). The Zn(2+) site is built by Cys820, Cys893, Cys900, and Cys903.

This sequence belongs to the RNA polymerase beta' chain family. In terms of assembly, the RNAP catalytic core consists of 2 alpha, 1 beta, 1 beta' and 1 omega subunit. When a sigma factor is associated with the core the holoenzyme is formed, which can initiate transcription. Requires Mg(2+) as cofactor. It depends on Zn(2+) as a cofactor.

The enzyme catalyses RNA(n) + a ribonucleoside 5'-triphosphate = RNA(n+1) + diphosphate. DNA-dependent RNA polymerase catalyzes the transcription of DNA into RNA using the four ribonucleoside triphosphates as substrates. This chain is DNA-directed RNA polymerase subunit beta', found in Methylorubrum populi (strain ATCC BAA-705 / NCIMB 13946 / BJ001) (Methylobacterium populi).